Here is a 222-residue protein sequence, read N- to C-terminus: N-(5'-phosphoribosyl)anthranilate isomerase (222 aa).

This sequence belongs to the TrpF family.

The catalysed reaction is N-(5-phospho-beta-D-ribosyl)anthranilate = 1-(2-carboxyphenylamino)-1-deoxy-D-ribulose 5-phosphate. The protein operates within amino-acid biosynthesis; L-tryptophan biosynthesis; L-tryptophan from chorismate: step 3/5. In Prosthecochloris aestuarii (strain DSM 271 / SK 413), this protein is N-(5'-phosphoribosyl)anthranilate isomerase.